The chain runs to 246 residues: Probable phosphatase AHA_1344 (246 aa).

Residues His-8, His-10, His-16, His-41, Glu-74, His-102, His-132, Asp-193, and His-195 each coordinate Zn(2+).

Belongs to the PHP family. The cofactor is Zn(2+).

The protein is Probable phosphatase AHA_1344 of Aeromonas hydrophila subsp. hydrophila (strain ATCC 7966 / DSM 30187 / BCRC 13018 / CCUG 14551 / JCM 1027 / KCTC 2358 / NCIMB 9240 / NCTC 8049).